Consider the following 674-residue polypeptide: Nucleoporin NDC1 (674 aa).

Residues 1-24 are Cytoplasmic-facing; that stretch reads MATAVSRPCAGRSRDILWRVLGWR. A helical transmembrane segment spans residues 25–45; sequence IVASIVWSVLFLPICTTVFII. Topologically, residues 46 to 68 are perinuclear space; the sequence is FSRIDLFHPIQWLSDSFSDLYSS. The helical transmembrane segment at 69–89 threads the bilayer; the sequence is YVIFYFLLLSVVIIIISIFNV. Over 90-114 the chain is Cytoplasmic; the sequence is EFYAVVPSIPCSRLALIGKIIHPQQ. A helical membrane pass occupies residues 115–135; the sequence is LMHSFIHAAMGMVMAWCAAVI. At 136 to 165 the chain is on the perinuclear space side; the sequence is TQGQYSFLVVPCTGTNSFGSPAAQTCLNEY. A helical transmembrane segment spans residues 166 to 186; sequence HLFFLLTGAFMGYSYSLLYFV. Residues 187-225 are Cytoplasmic-facing; sequence NNMNYLPFPIIQQYKFLRFRRSLLLLVKHSCVESLFLVR. The chain crosses the membrane as a helical span at residues 226-246; that stretch reads NFCILYYFLGYIPKAWISTAM. At 247-272 the chain is on the perinuclear space side; that stretch reads NLHIDEQVHRPLDTVSGLLNLSLLYH. The chain crosses the membrane as a helical span at residues 273–293; sequence VWLCGVFLLTTWYVSWILFKI. The Cytoplasmic portion of the chain corresponds to 294-674; that stretch reads YATEAHVFPV…RLQQFLEFKE (381 aa). The disordered stretch occupies residues 394–425; the sequence is SSSYPVEPKKLNSPEETAFQTPKSSQMPRPSV. At S406 the chain carries Phosphoserine. The span at 407-421 shows a compositional bias: polar residues; sequence PEETAFQTPKSSQMP. Position 414 is a phosphothreonine (T414). Position 439 is a phosphoserine (S439). At T440 the chain carries Phosphothreonine. A Phosphoserine modification is found at S445. T449 bears the Phosphothreonine mark. Phosphoserine occurs at positions 471 and 474.

The protein belongs to the NDC1 family. In terms of assembly, interacts with the NUP35/NUP53. Interacts with AAAS, anchoring it to the nuclear envelope.

The protein resides in the nucleus. It localises to the nuclear pore complex. Its subcellular location is the nucleus membrane. Component of the nuclear pore complex (NPC), which plays a key role in de novo assembly and insertion of NPC in the nuclear envelope. Required for NPC and nuclear envelope assembly, possibly by forming a link between the nuclear envelope membrane and soluble nucleoporins, thereby anchoring the NPC in the membrane. The chain is Nucleoporin NDC1 (NDC1) from Homo sapiens (Human).